Consider the following 550-residue polypeptide: 4-coumarate--CoA ligase-like 8 (550 aa).

Positions 207, 208, 209, 210, 211, and 215 each coordinate ATP. Phenylalanine 253 contacts (E)-4-coumaroyl-AMP. Residue arginine 274 coordinates CoA. Residues aspartate 276 to glutamine 347 are SBD1. (E)-4-coumaroyl-AMP-binding residues include glycine 325, glutamine 347, glycine 348, and threonine 352. Glutamine 347, glycine 348, threonine 352, aspartate 430, and arginine 445 together coordinate ATP. Residues glycine 348–tyrosine 412 form an SBD2 region. (E)-4-coumaroyl-AMP-binding residues include lysine 447 and lysine 451. Positions 453 and 454 each coordinate CoA. Residue lysine 536 participates in ATP binding. A Microbody targeting signal motif is present at residues serine 548–isoleucine 550.

Belongs to the ATP-dependent AMP-binding enzyme family. Mg(2+) serves as cofactor.

It is found in the peroxisome. The catalysed reaction is (E)-4-coumarate + ATP + CoA = (E)-4-coumaroyl-CoA + AMP + diphosphate. The enzyme catalyses (E)-4-coumarate + ATP + H(+) = (E)-4-coumaroyl-AMP + diphosphate. It carries out the reaction (E)-4-coumaroyl-AMP + CoA = (E)-4-coumaroyl-CoA + AMP + H(+). Carboxylate--CoA ligase that may use 4-coumarate as substrate. Follows a two-step reaction mechanism, wherein the carboxylate substrate first undergoes adenylation by ATP, followed by a thioesterification in the presence of CoA to yield the final CoA thioester. The polypeptide is 4-coumarate--CoA ligase-like 8 (Arabidopsis thaliana (Mouse-ear cress)).